Consider the following 425-residue polypeptide: Receptor-like protein 55 (425 aa).

The N-terminal stretch at 1 to 25 (MKPQQPQPPLLLLLLLPLLLTTVSS) is a signal peptide. The Extracellular portion of the chain corresponds to 26–397 (YPLNPKQLKA…EEEHKGSNKT (372 aa)). 4 N-linked (GlcNAc...) asparagine glycosylation sites follow: asparagine 40, asparagine 54, asparagine 79, and asparagine 132. 7 LRR repeats span residues 144–169 (LKNLKTLYISSTPIQTSRRLYVILGN), 170–193 (MHKLTSLTISNSNLTGLIPKSFHS), 195–216 (LRYIDLSNNSLKGSIRISITRL), 217–240 (KNLKSLNLSHNSLSGQIPNKIKSL), 242–264 (FLKNLSLASNKLSGTIPNSLSSI), 265–287 (SELTHLDLSMNQLNGTVPSFFSE), and 288–313 (MKNLKHLNLADNSFHGVLPFNESFIK). N-linked (GlcNAc...) asparagine glycosylation is found at asparagine 182, asparagine 202, asparagine 223, asparagine 245, asparagine 278, asparagine 308, and asparagine 329. Residues 355–389 (PSQKEESLSGENDYDVEGGNEEKTENLKTKEEEEE) are disordered. A compositionally biased stretch (basic and acidic residues) spans 374–389 (NEEKTENLKTKEEEEE). Asparagine 395 carries N-linked (GlcNAc...) asparagine glycosylation. Residues 398–418 (LFGLGIGLFSLVFLILFLFYL) form a helical membrane-spanning segment. Residues 419-425 (AKRCRLI) are Cytoplasmic-facing.

Belongs to the RLP family.

The protein localises to the cell membrane. Involved in plant defense. The protein is Receptor-like protein 55 of Arabidopsis thaliana (Mouse-ear cress).